The following is a 258-amino-acid chain: MMNPLIIKLGGVLLDSEEALERLFSALVNYRESHQRPLVIVHGGGCVVDELMKGLNLPVKKKNGLRVTPADQIDIITGALAGTANKTLLAWAKKHQIAAVGLFLGDGDSVKVTQLDEELGHVGLAQPGSPKLINTLLENGYLPVVSSIGVTDEGQLMNVNADQAATALAATLGADLILLSDVSGILDGKGQRIAEMTAAKAEQLIEQGIITDGMIVKVNAALDAARTLGRPVDIASWRHAEQLPALFNGMPMGTRILV.

Residues 44–45 (GG), Arg66, and Asn158 each bind substrate. Residues 181–186 (DVSGIL) and 209–211 (IIT) contribute to the ATP site.

Belongs to the acetylglutamate kinase family. ArgB subfamily. In terms of assembly, homodimer.

Its subcellular location is the cytoplasm. The catalysed reaction is N-acetyl-L-glutamate + ATP = N-acetyl-L-glutamyl 5-phosphate + ADP. It functions in the pathway amino-acid biosynthesis; L-arginine biosynthesis; N(2)-acetyl-L-ornithine from L-glutamate: step 2/4. Functionally, catalyzes the ATP-dependent phosphorylation of N-acetyl-L-glutamate. This Shigella dysenteriae serotype 1 (strain Sd197) protein is Acetylglutamate kinase.